The following is a 721-amino-acid chain: Catalase-peroxidase 1 (721 aa).

Positions 98-223 (WHAAGSYRVA…LAAVQMGLIY (126 aa)) form a cross-link, tryptophyl-tyrosyl-methioninium (Trp-Tyr) (with M-249). Catalysis depends on H99, which acts as the Proton acceptor. Positions 223 to 249 (YVNPEGVNGQPDPLRTAQDVRVTFGRM) form a cross-link, tryptophyl-tyrosyl-methioninium (Tyr-Met) (with W-98). A heme b-binding site is contributed by H264.

The protein belongs to the peroxidase family. Peroxidase/catalase subfamily. As to quaternary structure, homodimer or homotetramer. Heme b is required as a cofactor. Formation of the three residue Trp-Tyr-Met cross-link is important for the catalase, but not the peroxidase activity of the enzyme.

It carries out the reaction H2O2 + AH2 = A + 2 H2O. The enzyme catalyses 2 H2O2 = O2 + 2 H2O. Functionally, bifunctional enzyme with both catalase and broad-spectrum peroxidase activity. This chain is Catalase-peroxidase 1, found in Legionella pneumophila (strain Corby).